The sequence spans 133 residues: Small ribosomal subunit protein uS8 (133 aa).

A disordered region spans residues 1 to 28 (MANHDPISDMLTRIRNASEKRHEKTKVP). Residues 16–26 (NASEKRHEKTK) show a composition bias toward basic and acidic residues.

It belongs to the universal ribosomal protein uS8 family. As to quaternary structure, part of the 30S ribosomal subunit. Contacts proteins S5 and S12.

Functionally, one of the primary rRNA binding proteins, it binds directly to 16S rRNA central domain where it helps coordinate assembly of the platform of the 30S subunit. The chain is Small ribosomal subunit protein uS8 from Prochlorococcus marinus (strain NATL1A).